A 187-amino-acid polypeptide reads, in one-letter code: UPF0301 protein plu1183 (187 aa).

It belongs to the UPF0301 (AlgH) family.

This Photorhabdus laumondii subsp. laumondii (strain DSM 15139 / CIP 105565 / TT01) (Photorhabdus luminescens subsp. laumondii) protein is UPF0301 protein plu1183.